The primary structure comprises 262 residues: Adenosylcobinamide-GDP ribazoletransferase (262 aa).

6 consecutive transmembrane segments (helical) span residues 43 to 63 (YFGL…WLTQ), 66 to 86 (LPAG…TGGF), 120 to 140 (GALA…ELAL), 146 to 166 (AGSA…SIIF), 191 to 211 (LLIL…LAAL), and 242 to 262 (AAQQ…GNIL).

The protein belongs to the CobS family. Mg(2+) serves as cofactor.

The protein resides in the cell inner membrane. The enzyme catalyses alpha-ribazole + adenosylcob(III)inamide-GDP = adenosylcob(III)alamin + GMP + H(+). The catalysed reaction is alpha-ribazole 5'-phosphate + adenosylcob(III)inamide-GDP = adenosylcob(III)alamin 5'-phosphate + GMP + H(+). It participates in cofactor biosynthesis; adenosylcobalamin biosynthesis; adenosylcobalamin from cob(II)yrinate a,c-diamide: step 7/7. Its function is as follows. Joins adenosylcobinamide-GDP and alpha-ribazole to generate adenosylcobalamin (Ado-cobalamin). Also synthesizes adenosylcobalamin 5'-phosphate from adenosylcobinamide-GDP and alpha-ribazole 5'-phosphate. The polypeptide is Adenosylcobinamide-GDP ribazoletransferase (Shewanella baltica (strain OS155 / ATCC BAA-1091)).